A 251-amino-acid chain; its full sequence is Osmotin-like protein (251 aa).

Positions 1–21 (MSHLTTFLVFFLLAFVTYTYA) are cleaved as a signal peptide. Intrachain disulfides connect Cys31–Cys226, Cys73–Cys83, Cys88–Cys94, Cys142–Cys214, Cys147–Cys197, Cys155–Cys165, Cys169–Cys178, and Cys179–Cys184. N-linked (GlcNAc...) asparagine glycosylation is present at Asn233.

Belongs to the thaumatin family.

This is Osmotin-like protein (OLPA) from Nicotiana tabacum (Common tobacco).